Consider the following 152-residue polypeptide: Phospholipase A2 pkP2 (152 aa).

A signal peptide spans 1-21 (MNPAHLLVLLAVCVSLLGASA). Residues 22–27 (IPPLPL) constitute a propeptide that is removed on maturation. 7 disulfide bridges follow: cysteine 38/cysteine 104, cysteine 54/cysteine 151, cysteine 56/cysteine 72, cysteine 71/cysteine 132, cysteine 78/cysteine 125, cysteine 88/cysteine 118, and cysteine 111/cysteine 123. 3 residues coordinate Ca(2+): tyrosine 55, glycine 57, and glycine 59. Histidine 75 is an active-site residue. Aspartate 76 serves as a coordination point for Ca(2+). Residue aspartate 126 is part of the active site.

It belongs to the phospholipase A2 family. Group I subfamily. The cofactor is Ca(2+).

It is found in the secreted. The catalysed reaction is a 1,2-diacyl-sn-glycero-3-phosphocholine + H2O = a 1-acyl-sn-glycero-3-phosphocholine + a fatty acid + H(+). In terms of biological role, PA2 catalyzes the calcium-dependent hydrolysis of the 2-acyl groups in 3-sn-phosphoglycerides. The protein is Phospholipase A2 pkP2 of Laticauda semifasciata (Black-banded sea krait).